The following is a 691-amino-acid chain: DNA ligase (691 aa).

NAD(+) contacts are provided by residues 36–40 (DAEYD), 85–86 (SL), and Glu118. Residue Lys120 is the N6-AMP-lysine intermediate of the active site. Positions 141, 178, 295, and 319 each coordinate NAD(+). Positions 413, 416, 431, and 437 each coordinate Zn(2+). A BRCT domain is found at 595–684 (GRPQPLAGQT…ESASSEDAQP (90 aa)).

The protein belongs to the NAD-dependent DNA ligase family. LigA subfamily. Mg(2+) serves as cofactor. Mn(2+) is required as a cofactor.

It catalyses the reaction NAD(+) + (deoxyribonucleotide)n-3'-hydroxyl + 5'-phospho-(deoxyribonucleotide)m = (deoxyribonucleotide)n+m + AMP + beta-nicotinamide D-nucleotide.. Functionally, DNA ligase that catalyzes the formation of phosphodiester linkages between 5'-phosphoryl and 3'-hydroxyl groups in double-stranded DNA using NAD as a coenzyme and as the energy source for the reaction. It is essential for DNA replication and repair of damaged DNA. The polypeptide is DNA ligase (Chromohalobacter salexigens (strain ATCC BAA-138 / DSM 3043 / CIP 106854 / NCIMB 13768 / 1H11)).